A 249-amino-acid chain; its full sequence is tRNA (guanine-N(1)-)-methyltransferase (249 aa).

Residues glycine 113 and 133–138 (IGDYVL) each bind S-adenosyl-L-methionine.

This sequence belongs to the RNA methyltransferase TrmD family. In terms of assembly, homodimer.

It localises to the cytoplasm. The enzyme catalyses guanosine(37) in tRNA + S-adenosyl-L-methionine = N(1)-methylguanosine(37) in tRNA + S-adenosyl-L-homocysteine + H(+). Functionally, specifically methylates guanosine-37 in various tRNAs. This is tRNA (guanine-N(1)-)-methyltransferase from Aeromonas salmonicida (strain A449).